The primary structure comprises 507 residues: AMSH-like ubiquitin thioesterase 3 (507 aa).

Residues 73–107 (QERLGSRKRLRAVINELESLKPEFNQLVDKLNRVE) adopt a coiled-coil conformation. 2 disordered regions span residues 133–162 (HKAS…LTSS) and 214–242 (PSNT…LNGD). 3 stretches are compositionally biased toward polar residues: residues 146-162 (LPTS…LTSS), 214-224 (PSNTDWGSADN), and 232-242 (PSSSSASLNGD). Residues 333-463 (LHVPVRIMDD…IFHLSDPSGV (131 aa)) enclose the MPN domain. Positions 411, 413, 424, 426, 469, 475, and 477 each coordinate Zn(2+). The JAMM motif signature appears at 411–424 (HTHPTQTCFMSSVD).

The protein belongs to the peptidase M67C family. As to quaternary structure, interacts with PATL1 and PATL2. May also bind to HSC70-1, HSC70-3, VHA-A, BGLU23 and EPSIN1. Interacts with BRO1/ALIX. It depends on Zn(2+) as a cofactor.

Its subcellular location is the membrane. It localises to the cytoplasm. The protein localises to the vacuole membrane. It is found in the late endosome. Functionally, zinc metalloprotease that cleaves 'Lys-48'- and 'Lys-63'-linked polyubiquitin chains, but is not implicated in protein degradation by the 26S proteasome, deneddylation, or desumoylation. Required for intracellular trafficking (e.g. trafficking from the Golgi to the vacuole and the vacuolar trafficking of endocytosed cargo), endocytosis and vacuole biogenesis. This Arabidopsis thaliana (Mouse-ear cress) protein is AMSH-like ubiquitin thioesterase 3 (AMSH3).